The chain runs to 275 residues: Myoblast determination protein 1 homolog (275 aa).

Residues 84–135 (DRRKAATMRERRRLSKVNDAFETLKRCTSTNPNQRLPKVEILRNAISYIESL) enclose the bHLH domain. The segment at 234–275 (EGHEESPCSPHEGSVLSDTGTTAPSPTSCPQQQAQETIYQVL) is disordered. Residues 249–275 (LSDTGTTAPSPTSCPQQQAQETIYQVL) show a composition bias toward polar residues.

In terms of assembly, efficient DNA binding requires dimerization with another bHLH protein. In terms of tissue distribution, from mid-gastrula to just before somite formation, expressed in cells adjacent to axial mesoderm. Subsequently, during the anterior-to-posterior wave of somite formation and maturation, expressed within particular regions of each somite. Expressed in both muscle and non-muscle cells.

It localises to the nucleus. In terms of biological role, may act as a transcriptional activator that promotes transcription of muscle-specific target genes and plays a role in muscle differentiation. This chain is Myoblast determination protein 1 homolog (myod1), found in Danio rerio (Zebrafish).